The following is a 182-amino-acid chain: Ribulose bisphosphate carboxylase small subunit, chloroplastic 4 (182 aa).

Residues Met-1–Arg-41 constitute a chloroplast transit peptide.

It belongs to the RuBisCO small chain family. Heterohexadecamer of 8 large and 8 small subunits.

The protein resides in the plastid. It is found in the chloroplast. RuBisCO catalyzes two reactions: the carboxylation of D-ribulose 1,5-bisphosphate, the primary event in carbon dioxide fixation, as well as the oxidative fragmentation of the pentose substrate. Both reactions occur simultaneously and in competition at the same active site. Although the small subunit is not catalytic it is essential for maximal activity. The sequence is that of Ribulose bisphosphate carboxylase small subunit, chloroplastic 4 from Acetabularia peniculus (Green alga).